The chain runs to 176 residues: MPEEIATLAGGCFWCTEAAFKLLRGVLEVVPGYAGGHVPHPTYEEVCTGTTGHREAVQVRFDPGVLPYADLLRYFFAVHDPTSEDRQGPDVGPQYSPAIFYHSEEQKRVAEAVMRELAPLYPKPIATKLLPFTTFYPAEAYHRDYFARHPEAPYCRLVIAPKLEKARKAFKSLLRP.

C12 is a catalytic residue.

Belongs to the MsrA Met sulfoxide reductase family.

The enzyme catalyses L-methionyl-[protein] + [thioredoxin]-disulfide + H2O = L-methionyl-(S)-S-oxide-[protein] + [thioredoxin]-dithiol. It catalyses the reaction [thioredoxin]-disulfide + L-methionine + H2O = L-methionine (S)-S-oxide + [thioredoxin]-dithiol. Has an important function as a repair enzyme for proteins that have been inactivated by oxidation. Catalyzes the reversible oxidation-reduction of methionine sulfoxide in proteins to methionine. In Thermus thermophilus (strain ATCC BAA-163 / DSM 7039 / HB27), this protein is Peptide methionine sulfoxide reductase MsrA.